The following is a 251-amino-acid chain: Carbohydrate deacetylase (251 aa).

Histidine 59 and histidine 122 together coordinate Mg(2+).

It belongs to the YdjC deacetylase family. In terms of assembly, homodimer. Requires Mg(2+) as cofactor.

Probably catalyzes the deacetylation of acetylated carbohydrates an important step in the degradation of oligosaccharides. This Vibrio parahaemolyticus serotype O3:K6 (strain RIMD 2210633) protein is Carbohydrate deacetylase.